Reading from the N-terminus, the 202-residue chain is Orotate phosphoribosyltransferase (202 aa).

5-phospho-alpha-D-ribose 1-diphosphate is bound at residue 113–121 (EDIITTGGS). Residues Thr117 and Arg145 each coordinate orotate.

The protein belongs to the purine/pyrimidine phosphoribosyltransferase family. PyrE subfamily. Homodimer. Mg(2+) is required as a cofactor.

It carries out the reaction orotidine 5'-phosphate + diphosphate = orotate + 5-phospho-alpha-D-ribose 1-diphosphate. It functions in the pathway pyrimidine metabolism; UMP biosynthesis via de novo pathway; UMP from orotate: step 1/2. Its function is as follows. Catalyzes the transfer of a ribosyl phosphate group from 5-phosphoribose 1-diphosphate to orotate, leading to the formation of orotidine monophosphate (OMP). The protein is Orotate phosphoribosyltransferase of Campylobacter lari (strain RM2100 / D67 / ATCC BAA-1060).